A 252-amino-acid polypeptide reads, in one-letter code: uncharacterized protein (252 aa).

Residues 1-25 form the signal peptide; it reads MRKKKFLSRFAFGSLFLLCGTILSA. The N-palmitoyl cysteine moiety is linked to residue Cys26. The S-diacylglycerol cysteine moiety is linked to residue Cys26.

This sequence belongs to the MG439/MG440 family.

Its subcellular location is the cell membrane. This is an uncharacterized protein from Mycoplasma pneumoniae (strain ATCC 29342 / M129 / Subtype 1) (Mycoplasmoides pneumoniae).